Here is a 120-residue protein sequence, read N- to C-terminus: Small ribosomal subunit protein eS24 (120 aa).

Residues 101–120 (RDAGTKQKKGGSKGGQGAKG) form a disordered region.

Belongs to the eukaryotic ribosomal protein eS24 family.

The sequence is that of Small ribosomal subunit protein eS24 from Saccharolobus solfataricus (strain ATCC 35092 / DSM 1617 / JCM 11322 / P2) (Sulfolobus solfataricus).